A 199-amino-acid polypeptide reads, in one-letter code: FMN-dependent NADH:quinone oxidoreductase 2 (199 aa).

FMN-binding positions include Ser-10, 16–18, and 96–99; these read SVS and MYNF.

The protein belongs to the azoreductase type 1 family. Homodimer. Requires FMN as cofactor.

It catalyses the reaction 2 a quinone + NADH + H(+) = 2 a 1,4-benzosemiquinone + NAD(+). The catalysed reaction is N,N-dimethyl-1,4-phenylenediamine + anthranilate + 2 NAD(+) = 2-(4-dimethylaminophenyl)diazenylbenzoate + 2 NADH + 2 H(+). Its function is as follows. Quinone reductase that provides resistance to thiol-specific stress caused by electrophilic quinones. Functionally, also exhibits azoreductase activity. Catalyzes the reductive cleavage of the azo bond in aromatic azo compounds to the corresponding amines. This is FMN-dependent NADH:quinone oxidoreductase 2 from Pseudomonas fluorescens (strain ATCC BAA-477 / NRRL B-23932 / Pf-5).